A 647-amino-acid chain; its full sequence is Threonine--tRNA ligase (647 aa).

One can recognise a TGS domain in the interval 1–61 (MIKITFPDGA…EEDGSIEIVT (61 aa)). Positions 240–538 (DHRKLGKELD…LIETYKGAFP (299 aa)) are catalytic. The Zn(2+) site is built by Cys334, His385, and His515.

It belongs to the class-II aminoacyl-tRNA synthetase family. As to quaternary structure, homodimer. Zn(2+) is required as a cofactor.

It is found in the cytoplasm. The catalysed reaction is tRNA(Thr) + L-threonine + ATP = L-threonyl-tRNA(Thr) + AMP + diphosphate + H(+). Its function is as follows. Catalyzes the attachment of threonine to tRNA(Thr) in a two-step reaction: L-threonine is first activated by ATP to form Thr-AMP and then transferred to the acceptor end of tRNA(Thr). Also edits incorrectly charged L-seryl-tRNA(Thr). This chain is Threonine--tRNA ligase, found in Streptococcus agalactiae serotype III (strain NEM316).